The sequence spans 143 residues: Nucleoside diphosphate kinase (143 aa).

Positions 11, 59, 87, 93, 104, and 114 each coordinate ATP. His-117 (pros-phosphohistidine intermediate) is an active-site residue.

It belongs to the NDK family. Homotetramer. Requires Mg(2+) as cofactor.

Its subcellular location is the cytoplasm. The enzyme catalyses a 2'-deoxyribonucleoside 5'-diphosphate + ATP = a 2'-deoxyribonucleoside 5'-triphosphate + ADP. It catalyses the reaction a ribonucleoside 5'-diphosphate + ATP = a ribonucleoside 5'-triphosphate + ADP. Functionally, major role in the synthesis of nucleoside triphosphates other than ATP. The ATP gamma phosphate is transferred to the NDP beta phosphate via a ping-pong mechanism, using a phosphorylated active-site intermediate. This is Nucleoside diphosphate kinase from Shewanella sp. (strain MR-4).